An 848-amino-acid polypeptide reads, in one-letter code: F-BAR domain only protein 2 (848 aa).

The F-BAR domain occupies 4 to 250; sequence PYFLENFWGN…NMENTSVESL (247 aa). Residues 87–114 adopt a coiled-coil conformation; that stretch reads HMELVRKLQELIKEVQKYVDEQAKNHKK. Disordered stretches follow at residues 292-316 and 404-526; these read IPGR…NASN and LSPT…RAES. Phosphoserine occurs at positions 405 and 417. Low complexity predominate over residues 445-460; the sequence is PFGPTSTGSSSSLPQS. The region spanning 580–848 is the MHD domain; that stretch reads ALPIAVAFTE…FATGRYMADC (269 aa).

It belongs to the FCHO family. As to quaternary structure, homodimer.

The protein resides in the membrane. Its subcellular location is the clathrin-coated pit. In terms of biological role, may function in an early step of clathrin-mediated endocytosis. This chain is F-BAR domain only protein 2 (fcho2), found in Danio rerio (Zebrafish).